A 434-amino-acid polypeptide reads, in one-letter code: MVVEFTKSEALHKEALEHIVGGVNSPSRSFKAVGGGAPVAMERGKGAYFWDVDGNKYIDYLAAYGPIITGHAHPHITKAITTAAENGVLYGTPTALEVKFAKMLKEAMPALDKVRFVNSGTEAVMTTIRVARAYTGRTKIMKFAGCYHGHSDLVLVAAGSGPSTLGTPDSAGVPQSIAQEVITVPFNNVETLKEALDKWGHEVAAILVEPIVGNFGIVEPKPGFLEKVNELVHEAGALVIYDEVITAFRFMYGGAQDLLGVTPDLTALGKVIGGGLPIGAYGGKKEIMEQVAPLGPAYQAGTMAGNPASMASGIACLEVLQQEGLYEKLDELGAMLEKGILEQAAKHNIDITLNRLKGALTVYFTTNTIENYDAAQDTDGEMFGKFFKLMLQEGVNLAPSKYEAWFLTTEHTKEDIEYTIEAVGRAFAALADNK.

K270 carries the N6-(pyridoxal phosphate)lysine modification.

The protein belongs to the class-III pyridoxal-phosphate-dependent aminotransferase family. HemL subfamily. As to quaternary structure, homodimer. Requires pyridoxal 5'-phosphate as cofactor.

The protein localises to the cytoplasm. It carries out the reaction (S)-4-amino-5-oxopentanoate = 5-aminolevulinate. The protein operates within porphyrin-containing compound metabolism; protoporphyrin-IX biosynthesis; 5-aminolevulinate from L-glutamyl-tRNA(Glu): step 2/2. The chain is Glutamate-1-semialdehyde 2,1-aminomutase 1 from Bacillus thuringiensis subsp. konkukian (strain 97-27).